The sequence spans 474 residues: tRNA modification GTPase MnmE (474 aa).

Positions 35, 92, and 135 each coordinate (6S)-5-formyl-5,6,7,8-tetrahydrofolate. The TrmE-type G domain occupies 231 to 396 (GLHVVLAGQP…LRAALLEIAG (166 aa)). Asn-241 contributes to the K(+) binding site. GTP contacts are provided by residues 241 to 246 (NVGKSS), 260 to 266 (TPIAGTT), 285 to 288 (DTAG), and 377 to 379 (SAR). Ser-245 is a binding site for Mg(2+). 3 residues coordinate K(+): Thr-260, Ile-262, and Thr-265. Thr-266 serves as a coordination point for Mg(2+). Lys-474 provides a ligand contact to (6S)-5-formyl-5,6,7,8-tetrahydrofolate.

It belongs to the TRAFAC class TrmE-Era-EngA-EngB-Septin-like GTPase superfamily. TrmE GTPase family. In terms of assembly, homodimer. Heterotetramer of two MnmE and two MnmG subunits. K(+) is required as a cofactor.

It localises to the cytoplasm. In terms of biological role, exhibits a very high intrinsic GTPase hydrolysis rate. Involved in the addition of a carboxymethylaminomethyl (cmnm) group at the wobble position (U34) of certain tRNAs, forming tRNA-cmnm(5)s(2)U34. The sequence is that of tRNA modification GTPase MnmE from Ralstonia nicotianae (strain ATCC BAA-1114 / GMI1000) (Ralstonia solanacearum).